The following is a 543-amino-acid chain: MSNITKKSLIAAGILTALIAASAATAADVPAGVQLADKQTLVRNNGSEVQSLDPHKIEGVPESNVSRDLFEGLLISDVEGHPSPGVAEKWENKDFKVWTFHLRENAKWSDGTPVTAHDFVYSWQRLADPNTASPYASYLQYGHIANIDDIIAGKKPATDLGVKALDDHTFEVTLSEPVPYFYKLLVHPSVSPVPKSAVEKFGDKWTQPANIVTNGAYKLKNWVVNERIVLERNPQYWDNAKTVINQVTYLPISSEVTDVNRYRSGEIDMTYNNMPIELFQKLKKEIPNEVRVDPYLCTYYYEINNQKAPFNDVRVRTALKLALDRDIIVNKVKNQGDLPAYSYTPPYTDGAKLVEPEWFKWSQQKRNEEAKKLLAEAGFTADKPLTFDLLYNTSDLHKKLAIAVASIWKKNLGVNVNLENQEWKTFLDTRHQGTFDVARAGWCADYNEPTSFLNTMLSDSSNNTAHYKSPAFDKLIADTLKVADDTQRSELYAKAEQQLDKDSAIVPVYYYVNARLVKPWVGGYTGKDPLDNIYVKNLYIIKH.

A signal peptide spans 1 to 26 (MSNITKKSLIAAGILTALIAASAATA). Residues Cys297 and Cys443 are joined by a disulfide bond.

Belongs to the bacterial solute-binding protein 5 family. In terms of assembly, the complex is composed of two ATP-binding proteins (OppD and OppF), two transmembrane proteins (OppB and OppC) and a solute-binding protein (OppA).

The protein localises to the periplasm. Functionally, part of the ABC transporter complex OppABCDF involved in the uptake of oligopeptides, including the cell wall murein tripeptide L-alanyl-gamma-D-glutamyl-meso-diaminopimelate. Plays an important nutritional role and is involved in the recycling of cell wall peptides. Binds peptides containing from two to five amino acid residues regardless of their sequence. Also binds cell wall peptides, such as L-alanyl-gamma-D-glutamyl-meso-diaminopimelate. This chain is Periplasmic oligopeptide-binding protein OppA, found in Salmonella typhimurium (strain LT2 / SGSC1412 / ATCC 700720).